A 3018-amino-acid chain; its full sequence is Genome polyprotein (3018 aa).

Residue Ser2 is modified to N-acetylserine; by host. The segment at 2–23 (STLPKPQRKTKRNTNRRPMDVK) is interaction with STAT1. Residues 2-58 (STLPKPQRKTKRNTNRRPMDVKFPGGGQIVGGVYLLPRKGPRLGVRATRKTSERSQP) are interaction with EIF2AK2/PKR. The segment at 2–59 (STLPKPQRKTKRNTNRRPMDVKFPGGGQIVGGVYLLPRKGPRLGVRATRKTSERSQPR) is interaction with DDX3X. A disordered region spans residues 2–75 (STLPKPQRKT…PKARQPQGRH (74 aa)). The Cytoplasmic segment spans residues 2-168 (STLPKPQRKT…EDGINYATGN (167 aa)). 2 short sequence motifs (nuclear localization signal) span residues 5–13 (PKPQRKTKR) and 38–43 (PRKGPR). Basic residues predominate over residues 7-16 (PQRKTKRNTN). Phosphoserine; by host is present on Ser53. 2 consecutive short sequence motifs (nuclear localization signal) follow at residues 58–64 (PRGRRQP) and 66–71 (PKARQP). Residues Ser99 and Ser116 each carry the phosphoserine; by host modification. The important for endoplasmic reticulum and mitochondrial localization stretch occupies residues 112–152 (PRRRSRNLGKVIDTLTCGFADLMWYIPVVGAPLGGVAAALA). The interval 122–173 (VIDTLTCGFADLMWYIPVVGAPLGGVAAALAHGVRAIEDGINYATGNLPGCS) is interaction with APOA2. The interval 164–167 (YATG) is important for lipid droplets localization. The chain crosses the membrane as a helical span at residues 169–189 (LPGCSFSIFLLALLSCLTTPA). A propeptide spans 178–191 (LLALLSCLTTPASA) (ER anchor for the core protein, removed in mature form by host signal peptidase). Residues 190–358 (SALTYGNSSG…FGGHWGILLA (169 aa)) are Lumenal-facing. 4 N-linked (GlcNAc...) asparagine; by host glycosylation sites follow: Asn196, Asn209, Asn234, and Asn250. An important for fusion region spans residues 265–296 (LAGAAVVCSSLYIGDLCGSLFLAGQLFAFQPR). N-linked (GlcNAc...) asparagine; by host glycosylation occurs at Asn305. Residues 359–379 (VAYFGMAGNWLKVLAVLFLFA) form a helical membrane-spanning segment. Residues 380–729 (GVEAQTMIAH…WEYIVLMFLV (350 aa)) are Lumenal-facing. An HVR1 region spans residues 385–411 (TMIAHGVSQTTSGFASLLTPGAKQNIQ). N-linked (GlcNAc...) (high mannose) asparagine; by host glycans are attached at residues Asn416, Asn422, and Asn429. Cystine bridges form between Cys428/Cys552, Cys451/Cys458, Cys486/Cys494, and Cys503/Cys508. The N-linked (GlcNAc...) asparagine; by host glycan is linked to Asn447. Positions 474-478 (KNVSG) are HVR2. N-linked (GlcNAc...) asparagine; by host glycosylation is present at Asn475. Residues 480-493 (SDDRPYCWHYAPRP) form a CD81-binding 1 region. A glycan (N-linked (GlcNAc...) asparagine; by host) is linked at Asn532. The segment at 544–551 (PPTGGWFG) is CD81-binding 2. N-linked (GlcNAc...) asparagine; by host glycosylation is present at Asn556. Residues Cys564 and Cys569 are joined by a disulfide bond. N-linked (GlcNAc...) asparagine; by host glycosylation occurs at Asn577. Intrachain disulfides connect Cys585–Cys589, Cys601–Cys624, and Cys611–Cys648. Asn627 and Asn649 each carry an N-linked (GlcNAc...) (high mannose) asparagine; by host glycan. An intrachain disulfide couples Cys656 to Cys681. Positions 664-675 (IEMSPLLFSTTQ) are PKR/eIF2-alpha phosphorylation homology domain (PePHD). The helical transmembrane segment at 730-750 (LADARICTCLWLMLLISTVEA) threads the bilayer. The Lumenal portion of the chain corresponds to 751–761 (AVERLVVLNAA). The helical transmembrane segment at 762–782 (SAAGTAGWWWAVLFLCCVWYV) threads the bilayer. The Cytoplasmic portion of the chain corresponds to 783-786 (KGRL). A helical transmembrane segment spans residues 787–807 (VPACTYMALGMWPLLLTILAL). The Lumenal segment spans residues 808-817 (PPRAYAMDNE). The chain crosses the membrane as a helical span at residues 818-838 (QAASLGAVGLLVITIFSITPM). Residues 839–885 (YKKLLNCFIWWNQYFLARAEAMVHEWVPDLRVRGGRDSIILLTCLLH) lie on the Cytoplasmic side of the membrane. Residues 886-906 (PQLGFEVTKILLAVLAPLYIL) form a helical membrane-spanning segment. The Lumenal portion of the chain corresponds to 907–932 (QYSLLKVPYFVRAHILLRACLLVRRL). In terms of domain architecture, Peptidase C18 spans 907 to 1030 (QYSLLKVPYF…DMQRGGWKLL (124 aa)). Positions 908-1210 (YSLLKVPYFV…PVENMETTMR (303 aa)) are protease NS2-3. Cys926 carries S-palmitoyl cysteine; by host lipidation. Residues 933–953 (AGGKYVQACLLRLGAWTGTFV) traverse the membrane as a helical segment. Residues 933–953 (AGGKYVQACLLRLGAWTGTFV) are interaction with host SCPS1. Over 954 to 1661 (YDHLAPLSDW…CMSADLEVIT (708 aa)) the chain is Cytoplasmic. Residues His956, Glu976, and Cys997 each act as for protease NS2 activity; shared with dimeric partner in the active site. Residues 1031–1212 (APITAYAQQT…ENMETTMRSP (182 aa)) form the Peptidase S29 domain. Residues His1087 and Asp1111 each act as charge relay system; for serine protease NS3 activity in the active site. Positions 1127 and 1129 each coordinate Zn(2+). The Charge relay system; for serine protease NS3 activity role is filled by Ser1169. Zn(2+)-binding residues include Cys1175 and His1179. Residue 1234-1241 (APTGSGKS) participates in ATP binding. Mg(2+)-binding residues include Ser1241 and Glu1321. The short motif at 1320-1323 (DECH) is the DECH box element. The interval 1490 to 1502 (QRRGRTGRGKPGV) is RNA-binding. Residues 1662–1682 (STWVLVGGVLAALAAYCLSVG) form a helical membrane-spanning segment. Positions 1683-1694 (CVVICGRITLTG) are NS3-binding. At 1683-1809 (CVVICGRITL…SLTSPLRTSQ (127 aa)) the chain is on the cytoplasmic side. A helical membrane pass occupies residues 1810–1830 (TLLLNILGGWIAAQVAPPPAS). Residues 1831–1832 (TA) lie on the Lumenal side of the membrane. A helical membrane pass occupies residues 1833–1853 (FVVSGLAGAAVGSIRLGRVLV). A topological domain (cytoplasmic) is located at residue Asp1854. A helical membrane pass occupies residues 1855-1875 (VLAGYGAGVSGALVAFKIMSG). The Lumenal portion of the chain corresponds to 1876–1885 (ECPSTEDMVN). The chain crosses the membrane as a helical span at residues 1886–1906 (LLPALLSPGVALVGVVCAAIL). Over 1907–1976 (RRHVGPAEGA…WVNEDTATPC (70 aa)) the chain is Cytoplasmic. The S-palmitoyl cysteine; by host moiety is linked to residue Cys1976. Residues 1977-2006 (ATSWLRDVWDWVCTVLSDFKVWLQAKLFPR) lie within the membrane without spanning it. The Cytoplasmic portion of the chain corresponds to 2007–2997 (LPGIPFLSCQ…YHSVSQARPR (991 aa)). Zn(2+) is bound by residues Cys2015, Cys2033, Cys2035, and Cys2056. The segment at 2124–2212 (EFFTEVDGVR…ASSSANQLSA (89 aa)) is FKBP8-binding. The tract at residues 2124–2337 (EFFTEVDGVR…PVPPPRRKRL (214 aa)) is transcriptional activation. Residues 2139–2143 (PPCKP) form an interaction with non-structural protein 4A region. Residues 2192–2215 (RRLKKGSPPSLASSSANQLSAPSL) form a disordered region. The tract at residues 2193–2445 (RLKKGSPPSL…ALITPCAAEE (253 aa)) is interaction with host SKP2. A phosphoserine; by host mark is found at Ser2198, Ser2201, Ser2205, Ser2211, and Ser2214. A compositionally biased stretch (low complexity) spans 2198 to 2215 (SPPSLASSSANQLSAPSL). The tract at residues 2214-2253 (SLRATCTTSQKHPEMELLQANLLWKHEMGSHIPRVQSENK) is ISDR. The interaction with EIF2AK2/PKR stretch occupies residues 2214–2279 (SLRATCTTSQ…REISVSVECH (66 aa)). The segment at 2253-2311 (KVVVLDSFELYPLEYEEREISVSVECHRQPRCKFPPVFPVWARPDNNPPFIQAWQMPGY) is NS4B-binding. The tract at residues 2304–2382 (QAWQMPGYEP…SITSPVPPDP (79 aa)) is V3. The short motif at 2327 to 2330 (APVP) is the SH3-binding element. The short motif at 2332-2340 (PRRKRLVHL) is the Nuclear localization signal element. A Glycyl lysine isopeptide (Lys-Gly) (interchain with G-Cter in ubiquitin) cross-link involves residue Lys2355. A disordered region spans residues 2359–2417 (ESSNDPGPSSDSGLSITSPVPPDPTTPEDAGSEAESYSSMPPLEGEPGDPDLSSGSWST). Residues 2360-2373 (SSNDPGPSSDSGLS) show a composition bias toward low complexity. 2 positions are modified to phosphoserine; by host: Ser2456 and Ser2469. Residues 2641–2759 (PMGFSYDTRC…ICESAGVQED (119 aa)) enclose the RdRp catalytic domain. The Mg(2+) site is built by Asp2647, Asp2745, and Asp2746. Residues 2998–3018 (FLLLGLLLLTVGVGIFLLPAR) form a helical membrane-spanning segment.

The protein belongs to the hepacivirus polyprotein family. Homooligomer. Interacts with E1 (via C-terminus). Interacts with the non-structural protein 5A. Interacts (via N-terminus) with host STAT1 (via SH2 domain); this interaction results in decreased STAT1 phosphorylation and ubiquitin-mediated proteasome-dependent STAT1 degradation, leading to decreased IFN-stimulated gene transcription. Interacts with host STAT3; this interaction constitutively activates STAT3. Interacts with host LTBR receptor. Interacts with host TNFRSF1A receptor and possibly induces apoptosis. Interacts with host HNRPK. Interacts with host YWHAE. Interacts with host UBE3A/E6AP. Interacts with host DDX3X. Interacts with host APOA2. Interacts with host RXRA protein. Interacts with host SP110 isoform 3/Sp110b; this interaction sequesters the transcriptional corepressor SP110 away from the nucleus. Interacts with host CREB3 nuclear transcription protein; this interaction triggers cell transformation. Interacts with host ACY3. Interacts with host C1QR1. Interacts with host RBM24; this interaction, which enhances the interaction of the mature core protein with 5'-UTR, may inhibit viral translation and favor replication. Interacts with host EIF2AK2/PKR; this interaction induces the autophosphorylation of EIF2AK2. Part of the viral assembly initiation complex composed of NS2, E1, E2, NS3, NS4A, NS5A and the mature core protein. In terms of assembly, forms a heterodimer with envelope glycoprotein E2. Interacts with mature core protein. Interacts with protease NS2. The heterodimer E1/E2 interacts with host CLDN1; this interaction plays a role in viral entry into host cell. Interacts with host SPSB2 (via C-terminus). Part of the viral assembly initiation complex composed of NS2, E1, E2, NS3, NS4A, NS5A and the mature core protein. Interacts with host NEURL3; this interaction prevents E1 binding to glycoprotein E2. As to quaternary structure, forms a heterodimer with envelope glycoprotein E1. Interacts with host CD81 and SCARB1 receptors; these interactions play a role in viral entry into host cell. Interacts with host EIF2AK2/PKR; this interaction inhibits EIF2AK2 and probably allows the virus to evade the innate immune response. Interacts with host CD209/DC-SIGN and CLEC4M/DC-SIGNR. Interact with host SPCS1; this interaction is essential for viral particle assembly. Interacts with protease NS2. The heterodimer E1/E2 interacts with host CLDN1; this interaction plays a role in viral entry into host cell. Part of the viral assembly initiation complex composed of NS2, E1, E2, NS3, NS4A, NS5A and the mature core protein. Interacts with host SLC3A2/4F2hc; the interaction may facilitate viral entry into host cell. Interacts with human PLSCR1. Homohexamer. Homoheptamer. Interacts with protease NS2. In terms of assembly, homodimer. Interacts with host SPCS1; this interaction is essential for viral particle assembly. Interacts with envelope glycoprotein E1. Interacts with envelope glycoprotein E2. Interacts with viroporin p7. Interacts with serine protease/helicase NS3. Part of the replication complex composed of NS2, NS3, NS4A, NS4B, NS5A and the RNA-directed RNA polymerase embedded in an ER-derived membranous web. Part of the viral assembly initiation complex composed of NS2, E1, E2, NS3, NS4A, NS5A and the mature core protein. As to quaternary structure, interacts with protease NS2. Interacts with non-structural protein 4A; this interaction stabilizes the folding of NS3 serine protease. NS3-NS4A interaction is essential for NS3 activation and allows membrane anchorage of the latter. NS3/NS4A complex also prevents phosphorylation of host IRF3, thus preventing the establishment of dsRNA induced antiviral state. Interacts with host MAVS; this interaction leads to the cleavage and inhibition of host MAVS. Interacts with host TICAM1; this interaction leads to the cleavage and inhibition of host TICAM1. Interacts with host TANK-binding kinase/TBK1; this interaction results in the inhibition of the association between TBK1 and IRF3, which leads to the inhibition of IRF3 activation. Interacts with host RBM24. Part of the replication complex composed of NS2, NS3, NS4A, NS4B, NS5A and the RNA-directed RNA polymerase embedded in an ER-derived membranous web. Part of the viral assembly initiation complex composed of NS2, E1, E2, NS3, NS4A, NS5A and the mature core protein. Interacts with NS3 serine protease; this interaction stabilizes the folding of NS3 serine protease. NS3-NS4A interaction is essential for NS3 activation and allows membrane anchorage of the latter. Interacts with non-structural protein 5A (via N-terminus). Part of the replication complex composed of NS2, NS3, NS4A, NS4B, NS5A and the RNA-directed RNA polymerase embedded in an ER-derived membranous web. Part of the viral assembly initiation complex composed of NS2, E1, E2, NS3, NS4A, NS5A and the mature core protein. In terms of assembly, homomultimer. Interacts with non-structural protein NS5A. Interacts with host PLA2G4C; this interaction likely initiates the recruitment of replication complexes to lipid droplets. Interacts with host STING; this interaction disrupts the interaction between STING and TBK1 thereby suppressing the interferon signaling. Part of the replication complex composed of NS2, NS3, NS4A, NS4B, NS5A and the RNA-directed RNA polymerase embedded in an ER-derived membranous web. As to quaternary structure, monomer. Homodimer; dimerization is required for RNA-binding. Interacts with the mature core protein. Interacts (via N-terminus) with non-structural protein 4A. Interacts with non-structural protein 4B. Interacts (via region D2) with RNA-directed RNA polymerase. Part of the viral assembly initiation complex composed of NS2, E1, E2, NS3, NS4A, NS5A and the mature core protein. Part of the replication complex composed of NS2, NS3, NS4A, NS4B, NS5A and the RNA-directed RNA polymerase embedded in an ER-derived membranous web. Interacts with host GRB2. Interacts with host BIN1. Interacts with host PIK3R1. Interacts with host SRCAP. Interacts with host FKBP8. Interacts (via C-terminus) with host VAPB (via MSP domain). Interacts with host EIF2AK2/PKR; this interaction leads to disruption of EIF2AK2 dimerization by NS5A and probably allows the virus to evade the innate immune response. Interacts (via N-terminus) with host PACSIN2 (via N-terminus); this interaction attenuates protein kinase C alpha-mediated phosphorylation of PACSIN2 by disrupting the interaction between PACSIN2 and PRKCA. Interacts (via N-terminus) with host SRC kinase (via SH2 domain). Interacts with most Src-family kinases. Interacts with host IFI27 and SKP2; promotes the ubiquitin-mediated proteasomal degradation of NS5A. Interacts with host GPS2. Interacts with host TNFRSF21; this interaction allows the modulation by the virus of JNK, p38 MAPK, STAT3, and Akt signaling pathways in a DR6-dependent manner. Interacts (via N-terminus) with host CIDEB (via N-terminus); this interaction seems to regulate the association of HCV particles with APOE. Interacts with host CHKA/Choline Kinase-alpha; CHKA bridges host PI4KA and NS5A and potentiates NS5A-stimulated PI4KA activity, which then facilitates the targeting of the ternary complex to the ER for viral replication. Interacts with host SPSB2 (via C-terminus); this interaction targets NS5A for ubiquitination and degradation. Interacts with host RAB18; this interaction may promote the association of NS5A and other replicase components with lipid droplets. Interacts (via region D2) with host PPIA/CYPA; the interaction stimulates RNA-binding ability of NS5A and is dependent on the peptidyl-prolyl cis-trans isomerase activity of PPIA/CYPA. Interacts with host TRIM14; this interaction induces the degradation of NS5A. Homooligomer. Interacts with non-structural protein 5A. Interacts with host VAPB. Interacts with host PRK2/PKN2. Interacts with host HNRNPA1 and SEPT6; these interactions facilitate viral replication. Part of the replication complex composed of NS2, NS3, NS4A, NS4B, NS5A and the RNA-directed RNA polymerase. The cofactor is Zn(2+). Mg(2+) is required as a cofactor. Post-translationally, specific enzymatic cleavages in vivo yield mature proteins. The structural proteins, core, E1, E2 and p7 are produced by proteolytic processing by host signal peptidases. The core protein precursor is synthesized as a 23 kDa, which is retained in the ER membrane through the hydrophobic signal peptide. Cleavage by the signal peptidase releases the 21 kDa mature core protein. The cleavage of the core protein precursor occurs between aminoacids 176 and 188 but the exact cleavage site is not known. Some degraded forms of the core protein appear as well during the course of infection. The other proteins (p7, NS2, NS3, NS4A, NS4B, NS5A and NS5B) are cleaved by the viral proteases. Autoprocessing between NS2 and NS3 is mediated by the NS2 cysteine protease catalytic domain and regulated by the NS3 N-terminal domain. Phosphorylated by host PKC and PKA. In terms of processing, ubiquitinated; mediated by UBE3A and leading to core protein subsequent proteasomal degradation. Post-translationally, highly N-glycosylated. Palmitoylation is required for NS2/3 autoprocessing and E2 recruitment to membranes. In terms of processing, palmitoylated. This modification may play a role in its polymerization or in protein-protein interactions. Post-translationally, phosphorylated on serines in a basal form termed p56. p58 is a hyperphosphorylated form of p56. p56 and p58 coexist in the cell in roughly equivalent amounts. Hyperphosphorylation is dependent on the presence of NS4A. Host CSNK1A1/CKI-alpha or RPS6KB1 kinases may be responsible for NS5A phosphorylation. Tyrosine phosphorylation is essential for the interaction with host SRC. In terms of processing, the N-terminus is phosphorylated by host PRK2/PKN2.

Its subcellular location is the host endoplasmic reticulum membrane. The protein localises to the host mitochondrion membrane. It localises to the virion. It is found in the host cytoplasm. The protein resides in the host nucleus. Its subcellular location is the host lipid droplet. The protein localises to the virion membrane. It localises to the host mitochondrion. It is found in the host cell membrane. The protein resides in the host perinuclear region. It carries out the reaction Hydrolysis of four peptide bonds in the viral precursor polyprotein, commonly with Asp or Glu in the P6 position, Cys or Thr in P1 and Ser or Ala in P1'.. The enzyme catalyses a ribonucleoside 5'-triphosphate + H2O = a ribonucleoside 5'-diphosphate + phosphate + H(+). It catalyses the reaction ATP + H2O = ADP + phosphate + H(+). The catalysed reaction is RNA(n) + a ribonucleoside 5'-triphosphate = RNA(n+1) + diphosphate. With respect to regulation, inhibited by the antiviral drug hexamethylene amiloride. Inhibition by amantadine appears to be genotype-dependent. Also inhibited by long-alkyl-chain iminosugar derivatives. Its activity is regulated as follows. Activity is up-regulated by PRK2/PKN2-mediated phosphorylation. Its function is as follows. Packages viral RNA to form a viral nucleocapsid, and promotes virion budding. Participates in the viral particle production as a result of its interaction with the non-structural protein 5A. Binds RNA and may function as a RNA chaperone to induce the RNA structural rearrangements taking place during virus replication. Modulates viral translation initiation by interacting with viral IRES and 40S ribosomal subunit. Affects various cell signaling pathways, host immunity and lipid metabolism. Prevents the establishment of cellular antiviral state by blocking the interferon-alpha/beta (IFN-alpha/beta) and IFN-gamma signaling pathways and by blocking the formation of phosphorylated STAT1 and promoting ubiquitin-mediated proteasome-dependent degradation of STAT1. Activates STAT3 leading to cellular transformation. Regulates the activity of cellular genes, including c-myc and c-fos. May repress the promoter of p53, and sequester CREB3 and SP110 isoform 3/Sp110b in the cytoplasm. Represses cell cycle negative regulating factor CDKN1A, thereby interrupting an important check point of normal cell cycle regulation. Targets transcription factors involved in the regulation of inflammatory responses and in the immune response: suppresses TNF-induced NF-kappa-B activation, and activates AP-1. Binds to dendritic cells (DCs) via C1QR1, resulting in down-regulation of T-lymphocytes proliferation. Alters lipid metabolism by interacting with hepatocellular proteins involved in lipid accumulation and storage. Induces up-regulation of FAS promoter activity, and thereby contributes to the increased triglyceride accumulation in hepatocytes (steatosis). Functionally, forms a heterodimer with envelope glycoprotein E2, which mediates virus attachment to the host cell, virion internalization through clathrin-dependent endocytosis and fusion with host membrane. Fusion with the host cell is most likely mediated by both E1 and E2, through conformational rearrangements of the heterodimer required for fusion rather than a classical class II fusion mechanism. E1/E2 heterodimer binds host apolipoproteins such as APOB and ApoE thereby forming a lipo-viro-particle (LVP). APOE associated to the LVP allows the initial virus attachment to cell surface receptors such as the heparan sulfate proteoglycans (HSPGs), syndecan-1 (SDC1), syndecan-1 (SDC2), the low-density lipoprotein receptor (LDLR) and scavenger receptor class B type I (SCARB1). The cholesterol transfer activity of SCARB1 allows E2 exposure and binding of E2 to SCARB1 and the tetraspanin CD81. E1/E2 heterodimer binding on CD81 activates the epithelial growth factor receptor (EGFR) signaling pathway. Diffusion of the complex E1-E2-EGFR-SCARB1-CD81 to the cell lateral membrane allows further interaction with Claudin 1 (CLDN1) and occludin (OCLN) to finally trigger HCV entry. Forms a heterodimer with envelope glycoprotein E1, which mediates virus attachment to the host cell, virion internalization through clathrin-dependent endocytosis and fusion with host membrane. Fusion with the host cell is most likely mediated by both E1 and E2, through conformational rearrangements of the heterodimer required for fusion rather than a classical class II fusion mechanism. The interaction between envelope glycoprotein E2 and host apolipoprotein E/APOE allows the proper assembly, maturation and infectivity of the viral particles. This interaction is probably promoted via the up-regulation of cellular autophagy by the virus. E1/E2 heterodimer binds host apolipoproteins such as APOB and APOE thereby forming a lipo-viro-particle (LVP). APOE associated to the LVP allows the initial virus attachment to cell surface receptors such as the heparan sulfate proteoglycans (HSPGs), syndecan-1 (SDC1), syndecan-1 (SDC2), the low-density lipoprotein receptor (LDLR) and scavenger receptor class B type I (SCARB1). The cholesterol transfer activity of SCARB1 allows E2 exposure and binding of E2 to SCARB1 and the tetraspanin CD81. E1/E2 heterodimer binding on CD81 activates the epithelial growth factor receptor (EGFR) signaling pathway. Diffusion of the complex E1-E2-EGFR-SCARB1-CD81 to the cell lateral membrane allows further interaction with Claudin 1 (CLDN1) and occludin (OCLN) to finally trigger HCV entry. Inhibits host EIF2AK2/PKR activation, preventing the establishment of an antiviral state. Viral ligand for CD209/DC-SIGN and CLEC4M/DC-SIGNR, which are respectively found on dendritic cells (DCs), and on liver sinusoidal endothelial cells and macrophage-like cells of lymph node sinuses. These interactions allow the capture of circulating HCV particles by these cells and subsequent facilitated transmission to permissive cells such as hepatocytes and lymphocyte subpopulations. The interaction between E2 and host amino acid transporter complex formed by SLC3A2 and SLC7A5/LAT1 may facilitate viral entry into host cell. In terms of biological role, ion channel protein that acts as a viroporin and plays an essential role in the assembly, envelopment and secretion of viral particles. Regulates the host cell secretory pathway, which induces the intracellular retention of viral glycoproteins and favors assembly of viral particles. Creates a pore in acidic organelles and releases Ca(2+) and H(+) in the cytoplasm of infected cells, leading to a productive viral infection. High levels of cytoplasmic Ca(2+) may trigger membrane trafficking and transport of viral ER-associated proteins to viroplasms, sites of viral genome replication. This ionic imbalance induces the assembly of the inflammasome complex, which triggers the maturation of pro-IL-1beta into IL-1beta through the action of caspase-1. Targets also host mitochondria and induces mitochondrial depolarization. In addition of its role as a viroporin, acts as a lipid raft adhesion factor. Its function is as follows. Cysteine protease required for the proteolytic auto-cleavage between the non-structural proteins NS2 and NS3. The N-terminus of NS3 is required for the function of NS2 protease (active region NS2-3). Promotes the initiation of viral particle assembly by mediating the interaction between structural and non-structural proteins. Functionally, displays three enzymatic activities: serine protease with a chymotrypsin-like fold, NTPase and RNA helicase. NS3 serine protease, in association with NS4A, is responsible for the cleavages of NS3-NS4A, NS4A-NS4B, NS4B-NS5A and NS5A-NS5B. The NS3/NS4A complex prevents phosphorylation of host IRF3, thus preventing the establishment of dsRNA induced antiviral state. The NS3/NS4A complex induces host amino acid transporter component SLC3A2, thus contributing to HCV propagation. NS3 RNA helicase binds to RNA and unwinds both dsDNA and dsRNA in the 3' to 5' direction, and likely resolves RNA complicated stable secondary structures in the template strand. Binds a single ATP and catalyzes the unzipping of a single base pair of dsRNA. Inhibits host antiviral proteins TBK1 and IRF3 thereby preventing the establishment of an antiviral state. Cleaves host MAVS/CARDIF thereby preventing the establishment of an antiviral state. Cleaves host TICAM1/TRIF, thereby disrupting TLR3 signaling and preventing the establishment of an antiviral state. Induces a specific membrane alteration that serves as a scaffold for the virus replication complex. This membrane alteration gives rise to the so-called ER-derived membranous web that contains the replication complex. NS4B self-interaction contributes to its function in membranous web formation. Promotes host TRIF protein degradation in a CASP8-dependent manner thereby inhibiting host TLR3-mediated interferon signaling. Disrupts the interaction between STING and TBK1 contributing to the inhibition of interferon signaling. In terms of biological role, phosphorylated protein that is indispensable for viral replication and assembly. Both hypo- and hyperphosphorylated states are required for the viral life cycle. The hyperphosphorylated form of NS5A is an inhibitor of viral replication. Involved in RNA-binding and especially in binding to the viral genome. Zinc is essential for RNA-binding. Participates in the viral particle production as a result of its interaction with the mature viral core protein. Its interaction with host VAPB may target the viral replication complex to vesicles. Down-regulates viral IRES translation initiation. Mediates interferon resistance, presumably by interacting with and inhibiting host EIF2AK2/PKR. Prevents BIN1-induced apoptosis. Acts as a transcriptional activator of some host genes important for viral replication when localized in the nucleus. Via the interaction with host PACSIN2, modulates lipid droplet formation in order to promote virion assembly. Modulates TNFRSF21/DR6 signaling pathway for viral propagation. Its function is as follows. RNA-dependent RNA polymerase that performs primer-template recognition and RNA synthesis during viral replication. Initiates RNA transcription/replication at a flavin adenine dinucleotide (FAD), resulting in a 5'- FAD cap on viral RNAs. In this way, recognition of viral 5' RNA by host pattern recognition receptors can be bypassed, thereby evading activation of antiviral pathways. This Hepatitis C virus genotype 6a (isolate EUHK2) (HCV) protein is Genome polyprotein.